We begin with the raw amino-acid sequence, 117 residues long: Large ribosomal subunit protein bL20 (117 aa).

The protein belongs to the bacterial ribosomal protein bL20 family.

In terms of biological role, binds directly to 23S ribosomal RNA and is necessary for the in vitro assembly process of the 50S ribosomal subunit. It is not involved in the protein synthesizing functions of that subunit. The sequence is that of Large ribosomal subunit protein bL20 from Gloeothece citriformis (strain PCC 7424) (Cyanothece sp. (strain PCC 7424)).